The primary structure comprises 962 residues: Leucine--tRNA ligase (962 aa).

Residues 68–79 (PYPSGAGLHVGH) carry the 'HIGH' region motif. Residues 559–582 (DYSPRTFDPDDANTSPETPLSRNE) are disordered. Polar residues predominate over residues 570–579 (ANTSPETPLS). A 'KMSKS' region motif is present at residues 733–737 (KMGKS). An ATP-binding site is contributed by lysine 736.

Belongs to the class-I aminoacyl-tRNA synthetase family.

It is found in the cytoplasm. It catalyses the reaction tRNA(Leu) + L-leucine + ATP = L-leucyl-tRNA(Leu) + AMP + diphosphate. The polypeptide is Leucine--tRNA ligase (Streptomyces avermitilis (strain ATCC 31267 / DSM 46492 / JCM 5070 / NBRC 14893 / NCIMB 12804 / NRRL 8165 / MA-4680)).